The sequence spans 390 residues: Homeobox protein Meis1 (390 aa).

Residues glycine 108 to glycine 192 form the MEIS N-terminal domain. Basic and acidic residues predominate over residues arginine 190–threonine 202. The tract at residues arginine 190–phenylalanine 279 is disordered. Residues arginine 203–tryptophan 213 show a composition bias toward polar residues. Residues arginine 272–methionine 334 constitute a DNA-binding region (homeobox; TALE-type). An interaction with DNA region spans residues tyrosine 299–arginine 329. The interval isoleucine 335–methionine 390 is required for transcriptional activation.

The protein belongs to the TALE/MEIS homeobox family. Interacts with the N-terminal region of PBX1 to form a heterodimer which binds DNA including a cAMP-responsive sequence in CYP17. Also forms heterodimers with PBX2. Forms heterotrimers with PBX1 or PBX2 and a number of HOX proteins including HOXA9, HOXD4 and HOXD9 where it acts as a non-DNA-binding partner. Also forms heterotrimers with PBX1 and HOX proteins including HOXD9 and HOXD10 where PBX1 is the non-DNA-binding partner. Heterodimer with DLX3. Heterodimer with HOXB13. Expressed at high levels in the lung with lower levels detected in the heart and brain. Expressed in pancreatic islets (beta-cells and non-beta-cells).

Its subcellular location is the nucleus. Functionally, acts as a transcriptional regulator of PAX6. Also acts as a transcriptional activator of PF4 in complex with PBX1 or PBX2. Required for hematopoiesis, megakaryocyte lineage development and vascular patterning. May function as a cofactor for HOXA7 and HOXA9 in the induction of myeloid leukemias. The protein is Homeobox protein Meis1 (Meis1) of Mus musculus (Mouse).